The primary structure comprises 320 residues: dTDP-glucose 4,6-dehydratase (320 aa).

NAD(+)-binding positions include 11-12, 38-41, 64-65, 84-88, and Ser-103; these read FI, DKLG, DI, and FAAET. Thr-88 provides a ligand contact to substrate. Thr-128 contributes to the substrate binding site. The active-site Proton donor is the Asp-129. Active-site proton acceptor residues include Glu-130 and Tyr-152. An NAD(+)-binding site is contributed by 152 to 156; that stretch reads YAASK. Substrate is bound at residue Asn-181. An NAD(+)-binding site is contributed by Asn-182. Substrate-binding positions include 191-192, 207-209, Arg-216, Asn-251, and 274-278; these read KM, PVY, and DRKGH.

This sequence belongs to the NAD(P)-dependent epimerase/dehydratase family. dTDP-glucose dehydratase subfamily. As to quaternary structure, homodimer. The cofactor is NAD(+).

The catalysed reaction is dTDP-alpha-D-glucose = dTDP-4-dehydro-6-deoxy-alpha-D-glucose + H2O. Probably involved in the biosynthesis of the acarviose moiety of the alpha-glucosidase inhibitor acarbose. Catalyzes the dehydration of dTDP-D-glucose to form dTDP-6-deoxy-D-xylo-4-hexulose via a three-step process involving oxidation, dehydration and reduction. The chain is dTDP-glucose 4,6-dehydratase from Actinoplanes sp. (strain ATCC 31044 / CBS 674.73 / SE50/110).